A 347-amino-acid chain; its full sequence is Phosphate acyltransferase (347 aa).

The protein belongs to the PlsX family. In terms of assembly, homodimer. Probably interacts with PlsY.

The protein localises to the cytoplasm. The catalysed reaction is a fatty acyl-[ACP] + phosphate = an acyl phosphate + holo-[ACP]. Its pathway is lipid metabolism; phospholipid metabolism. Its function is as follows. Catalyzes the reversible formation of acyl-phosphate (acyl-PO(4)) from acyl-[acyl-carrier-protein] (acyl-ACP). This enzyme utilizes acyl-ACP as fatty acyl donor, but not acyl-CoA. This is Phosphate acyltransferase from Methylobacillus flagellatus (strain ATCC 51484 / DSM 6875 / VKM B-1610 / KT).